The chain runs to 238 residues: MEESRADGRNPNQLRPFSCTRNPLDRAHGSARWAQGDTIVLAAVYGPKPGTRKGENPEKASIEVVWKPMTGQIGKQEKEYEMTLKRTLQSICLLTVHPNTTTSVILQVVGNDGSLLPCAINACCAALVFAGIPLKHLAVAIGCGVLEDGEVILDTNKAEEQQLKSFAHLVFPNSRKSASSKEPNQKEEDSERGLITSITHGVMSEEDYFSCIERGLAASSRISDFMRTTLQKQAPGDV.

The disordered stretch occupies residues 174-194 (SRKSASSKEPNQKEEDSERGL). Over residues 183-192 (PNQKEEDSER) the composition is skewed to basic and acidic residues.

The protein belongs to the RNase PH family. Homodimer or monomer when reduced or oxidized, respectively. Component of the exosome core complex.

It localises to the nucleus. Its subcellular location is the nucleolus. In terms of biological role, probable component of the exosome 3'-&gt;5' exoribonuclease complex, a complex that degrades inherently unstable mRNAs containing AU-rich elements (AREs) within their 3'-untranslated regions. May form a homodimer separately from exosome complexes and function in DNA cleavage process. Binds double-stranded DNA (dsDNA) and single-stranded RNA (ssRNA), and possesses hydrolytic DNase and phosphorolytic RNase activities in vitro. The polypeptide is Exosome complex exonuclease RRP46 homolog (RRP46) (Oryza sativa subsp. japonica (Rice)).